The chain runs to 312 residues: Probable deoxyhypusine synthase (312 aa).

The Nucleophile role is filled by Lys285.

Belongs to the deoxyhypusine synthase family. It depends on NAD(+) as a cofactor.

The catalysed reaction is [eIF5A protein]-L-lysine + spermidine = [eIF5A protein]-deoxyhypusine + propane-1,3-diamine. Its pathway is protein modification; eIF5A hypusination. Functionally, catalyzes the NAD-dependent oxidative cleavage of spermidine and the subsequent transfer of the butylamine moiety of spermidine to the epsilon-amino group of a specific lysine residue of the eIF-5A precursor protein to form the intermediate deoxyhypusine residue. This chain is Probable deoxyhypusine synthase (dys), found in Saccharolobus solfataricus (strain ATCC 35092 / DSM 1617 / JCM 11322 / P2) (Sulfolobus solfataricus).